Consider the following 1076-residue polypeptide: DNA-directed RNA polymerase subunit beta (1076 aa).

It belongs to the RNA polymerase beta chain family. In terms of assembly, in plastids the minimal PEP RNA polymerase catalytic core is composed of four subunits: alpha, beta, beta', and beta''. When a (nuclear-encoded) sigma factor is associated with the core the holoenzyme is formed, which can initiate transcription.

It is found in the plastid. It localises to the chloroplast. It catalyses the reaction RNA(n) + a ribonucleoside 5'-triphosphate = RNA(n+1) + diphosphate. Its function is as follows. DNA-dependent RNA polymerase catalyzes the transcription of DNA into RNA using the four ribonucleoside triphosphates as substrates. The sequence is that of DNA-directed RNA polymerase subunit beta from Lolium perenne (Perennial ryegrass).